Reading from the N-terminus, the 347-residue chain is Nicotinate-nucleotide--dimethylbenzimidazole phosphoribosyltransferase (347 aa).

Catalysis depends on Glu-316, which acts as the Proton acceptor.

The protein belongs to the CobT family.

It carries out the reaction 5,6-dimethylbenzimidazole + nicotinate beta-D-ribonucleotide = alpha-ribazole 5'-phosphate + nicotinate + H(+). Its pathway is nucleoside biosynthesis; alpha-ribazole biosynthesis; alpha-ribazole from 5,6-dimethylbenzimidazole: step 1/2. Functionally, catalyzes the synthesis of alpha-ribazole-5'-phosphate from nicotinate mononucleotide (NAMN) and 5,6-dimethylbenzimidazole (DMB). The protein is Nicotinate-nucleotide--dimethylbenzimidazole phosphoribosyltransferase of Vibrio campbellii (strain ATCC BAA-1116).